Here is a 591-residue protein sequence, read N- to C-terminus: Probable methyltransferase PMT6 (591 aa).

At 1–13 the chain is on the cytoplasmic side; sequence MRGSVIGAERSGQ. Residues 14–34 traverse the membrane as a helical; Signal-anchor for type II membrane protein segment; the sequence is TIMVALVLMVGSFYTGSLFGT. At 35 to 591 the chain is on the lumenal side; sequence NQPIYVSHPS…FCRKRFWAII (557 aa). Residues Asn-87, Asn-99, Asn-146, Asn-193, Asn-323, Asn-436, Asn-473, and Asn-515 are each glycosylated (N-linked (GlcNAc...) asparagine).

It belongs to the methyltransferase superfamily.

The protein resides in the endoplasmic reticulum membrane. This is Probable methyltransferase PMT6 from Arabidopsis thaliana (Mouse-ear cress).